The following is a 269-amino-acid chain: MSKKRIIFVLLYCDGFFCLSRNFKLQRIGDFRWLQRNYNFNYSATFIDELIILDISRKSRDINKFATLLYNLSENIFVPITAGGGIRSFEDAKVLFENGADKVCLNTSLIQCPHVSEKISSVYGQQSLVASIDFKHDHGDFKFFIDNGLIEVQYNIQELISFLDPLPFCEILLQSVDRDGTGTGFDLTLANTFRDQLSKPIILLGGAGHSDHLVEGLLHQSTDAVATAHLLNFVGDGLKLSREQAQRHSEVSLARWPLLSSTSFSTTKH.

The active site involves Asp133.

It belongs to the HisA/HisF family. In terms of assembly, heterodimer of HisH and HisF.

It localises to the cytoplasm. The enzyme catalyses 5-[(5-phospho-1-deoxy-D-ribulos-1-ylimino)methylamino]-1-(5-phospho-beta-D-ribosyl)imidazole-4-carboxamide + L-glutamine = D-erythro-1-(imidazol-4-yl)glycerol 3-phosphate + 5-amino-1-(5-phospho-beta-D-ribosyl)imidazole-4-carboxamide + L-glutamate + H(+). It functions in the pathway amino-acid biosynthesis; L-histidine biosynthesis; L-histidine from 5-phospho-alpha-D-ribose 1-diphosphate: step 5/9. In terms of biological role, IGPS catalyzes the conversion of PRFAR and glutamine to IGP, AICAR and glutamate. The HisF subunit catalyzes the cyclization activity that produces IGP and AICAR from PRFAR using the ammonia provided by the HisH subunit. In Parasynechococcus marenigrum (strain WH8102), this protein is Putative imidazole glycerol phosphate synthase subunit hisF2 (hisF2).